We begin with the raw amino-acid sequence, 648 residues long: MIKITLPDGSIKEFENGVTPMDVAKSISEGLARNVISAAFNNITVEISTELTTDGSLVLYTWNDKDGKKAFWHSTSHVMAQVLEEMYPGLKLTLGPAIDNGFYYDVDFGDTKIVEADFKKIESRILEISKEKHEFKLRPVTKADALELYKDNEYKFELISNLEDGTITFCDHATFTDLCRGGHIPNTGIIKAVKIMSIAGAYWRGDEKNKQLTRVYGTSFPKQKDLTDYLELLEEAKRRDHRKLGKELELFAFSQKVGQGLPLWLPKGAALRDRLEQFLKKAQKKGGYEQVVTPHIGQKELYVTSGHYAKYGADSFQPISTPTEGEEFLLKPMNCPHHCEIYNVRPWSYKDLPKRYAEFGTVYRYEQSGELHGLTRVRGFTQDDAHIFCTPDQLDEEFKKVIDLVLYVFGSLGFENFTAQISLRDKENRDKYIGSDENWEKAENAIINAARDKNLNTVVEYGEAAFYGPKLDFMVKDALGRSWQLGTIQVDYNLPERFELTYKGSDDQLHRPVMIHRAPFGSMERFIAILLEHTAGNFPLWLMPEQAIILCLSDKYEIYAKKVLNLLENHEIRALIDNRNESIGRKIRDAEMQKTPFMLIVGEEEEKNNTISIRRHGQEGKGNITVTIEEFARIVNDEISKTLKTFEV.

Residues 1 to 61 (MIKITLPDGS…TTDGSLVLYT (61 aa)) enclose the TGS domain. The catalytic stretch occupies residues 240 to 539 (DHRKLGKELE…LLEHTAGNFP (300 aa)). 3 residues coordinate Zn(2+): cysteine 335, histidine 386, and histidine 516.

This sequence belongs to the class-II aminoacyl-tRNA synthetase family. Homodimer. The cofactor is Zn(2+).

Its subcellular location is the cytoplasm. The catalysed reaction is tRNA(Thr) + L-threonine + ATP = L-threonyl-tRNA(Thr) + AMP + diphosphate + H(+). In terms of biological role, catalyzes the attachment of threonine to tRNA(Thr) in a two-step reaction: L-threonine is first activated by ATP to form Thr-AMP and then transferred to the acceptor end of tRNA(Thr). Also edits incorrectly charged L-seryl-tRNA(Thr). The polypeptide is Threonine--tRNA ligase (Flavobacterium psychrophilum (strain ATCC 49511 / DSM 21280 / CIP 103535 / JIP02/86)).